Here is a 743-residue protein sequence, read N- to C-terminus: Elongation factor 2 (743 aa).

Positions 19-265 (NNIRNIGIIA…MVVRHLPSPK (247 aa)) constitute a tr-type G domain. GTP is bound by residues 28–35 (AHIHHGKT), 94–98 (DTPGH), and 148–151 (NKVD). H615 is subject to Diphthamide.

It belongs to the TRAFAC class translation factor GTPase superfamily. Classic translation factor GTPase family. EF-G/EF-2 subfamily.

The protein localises to the cytoplasm. Catalyzes the GTP-dependent ribosomal translocation step during translation elongation. During this step, the ribosome changes from the pre-translocational (PRE) to the post-translocational (POST) state as the newly formed A-site-bound peptidyl-tRNA and P-site-bound deacylated tRNA move to the P and E sites, respectively. Catalyzes the coordinated movement of the two tRNA molecules, the mRNA and conformational changes in the ribosome. This chain is Elongation factor 2, found in Nanoarchaeum equitans (strain Kin4-M).